The following is a 397-amino-acid chain: Argininosuccinate synthase (397 aa).

Position 8–16 (A8–S16) interacts with ATP. L-citrulline is bound by residues Y86 and S91. Residue G116 coordinates ATP. Residues T118, N122, and D123 each coordinate L-aspartate. N122 serves as a coordination point for L-citrulline. Residues R126, S175, S184, E260, and Y272 each contribute to the L-citrulline site.

The protein belongs to the argininosuccinate synthase family. Type 1 subfamily. As to quaternary structure, homotetramer.

The protein localises to the cytoplasm. It catalyses the reaction L-citrulline + L-aspartate + ATP = 2-(N(omega)-L-arginino)succinate + AMP + diphosphate + H(+). It functions in the pathway amino-acid biosynthesis; L-arginine biosynthesis; L-arginine from L-ornithine and carbamoyl phosphate: step 2/3. The sequence is that of Argininosuccinate synthase from Clostridium botulinum (strain Okra / Type B1).